Reading from the N-terminus, the 379-residue chain is Armadillo repeat-containing X-linked protein 3 (379 aa).

The Mitochondrial intermembrane segment spans residues 1–6 (MGYARK). Mitochondrion outer membrane (MOM)-targeting sequence stretches follow at residues 1–6 (MGYARK) and 26–37 (RLTRGRKQNKEK). A helical; Signal-anchor membrane pass occupies residues 7 to 29 (VGWVTAGLVIGAGACYCIYRLTR). Over 30–379 (GRKQNKEKMA…TERMFPKSQE (350 aa)) the chain is Cytoplasmic. A phosphoserine mark is found at Ser-61, Ser-67, and Ser-72. Residues 89-98 (RARARARARA) are nuclear localization signal. Residues 95–106 (RARATRARRAVQ) show a composition bias toward basic residues. Positions 95-116 (RARATRARRAVQKRASPNSDDT) are disordered. Ser-110 is modified (phosphoserine). ARM repeat units lie at residues 111–151 (PNSD…NNAA), 153–192 (AFNR…NLSV), and 233–272 (VTNE…NLAE).

It belongs to the eutherian X-chromosome-specific Armcx family. As to quaternary structure, interacts (via ARM domain) with MIRO1, MIRO2 and TRAK2. The interaction with Miro is calcium-dependent. Interacts with Sox10. As to expression, highly expressed in the developing neural tissues, neural crest derivatives and hind limbs. Also widely expressed in the adult nervous tissue, especially in the forebrain, including the cerebral cortex, hippocampus and thalamus.

It localises to the mitochondrion outer membrane. Its subcellular location is the cytoplasm. The protein resides in the nucleus. Regulates mitochondrial aggregation and transport in axons in living neurons. May link mitochondria to the Trak2-kinesin motor complex via its interaction with Miro and Trak2. Mitochondrial distribution and dynamics is regulated through Armcx3 protein degradation, which is promoted by PCK and negatively regulated by Wnt1. Enhances the Sox10-mediated transactivation of the neuronal acetylcholine receptor subunit alpha-3 and beta-4 subunit gene promoters. This is Armadillo repeat-containing X-linked protein 3 (Armcx3) from Mus musculus (Mouse).